A 523-amino-acid polypeptide reads, in one-letter code: Butyrophilin subfamily 2 member A2 (523 aa).

The N-terminal stretch at M1–A32 is a signal peptide. Over Q33–M265 the chain is Extracellular. Positions F34–V145 constitute an Ig-like V-type domain. N50, N118, N220, and N226 each carry an N-linked (GlcNAc...) asparagine glycan. Residues C55 and C129 are joined by a disulfide bond. Residues P153–K234 enclose the Ig-like C2-type domain. The chain crosses the membrane as a helical span at residues V266–I286. Residues I286–R321 are a coiled coil. At K287 to L523 the chain is on the cytoplasmic side. The region spanning I309–A502 is the B30.2/SPRY domain.

Belongs to the immunoglobulin superfamily. BTN/MOG family. N-glycosylated. In terms of tissue distribution, highly expressed in brain, bone marrow, small intestine, muscle, spleen and pancreas. Moderate expression was seen in lung, liver and kidney.

The protein localises to the membrane. Its function is as follows. Inhibits the proliferation of CD4 and CD8 T-cells activated by anti-CD3 antibodies, T-cell metabolism and IL2 and IFNG secretion. The sequence is that of Butyrophilin subfamily 2 member A2 (BTN2A2) from Homo sapiens (Human).